Here is a 308-residue protein sequence, read N- to C-terminus: Ornithine carbamoyltransferase (308 aa).

Residues 56–59 (STRT), Gln83, Arg107, and 134–137 (HPCQ) contribute to the carbamoyl phosphate site. L-ornithine is bound by residues Asn165, Asp225, and 229-230 (SM). Carbamoyl phosphate is bound by residues 266 to 267 (CL) and Arg294.

It belongs to the aspartate/ornithine carbamoyltransferase superfamily. OTCase family.

The protein resides in the cytoplasm. It catalyses the reaction carbamoyl phosphate + L-ornithine = L-citrulline + phosphate + H(+). It functions in the pathway amino-acid biosynthesis; L-arginine biosynthesis; L-arginine from L-ornithine and carbamoyl phosphate: step 1/3. In terms of biological role, reversibly catalyzes the transfer of the carbamoyl group from carbamoyl phosphate (CP) to the N(epsilon) atom of ornithine (ORN) to produce L-citrulline. In Ruegeria pomeroyi (strain ATCC 700808 / DSM 15171 / DSS-3) (Silicibacter pomeroyi), this protein is Ornithine carbamoyltransferase.